We begin with the raw amino-acid sequence, 100 residues long: Small ribosomal subunit protein uS14c (100 aa).

The protein belongs to the universal ribosomal protein uS14 family. As to quaternary structure, part of the 30S ribosomal subunit.

Its subcellular location is the plastid. In terms of biological role, binds 16S rRNA, required for the assembly of 30S particles. This Cuscuta gronovii (Common dodder) protein is Small ribosomal subunit protein uS14c (rps14).